The chain runs to 486 residues: Cardiolipin synthase A (486 aa).

The next 2 helical transmembrane spans lie at 3–23 (TFYT…IAGV) and 38–58 (MAWL…YLSF). PLD phosphodiesterase domains are found at residues 219–246 (MDLR…VDPR) and 399–426 (EGGL…DMRS). Residues histidine 224, lysine 226, aspartate 231, histidine 404, lysine 406, and aspartate 411 contribute to the active site.

Belongs to the phospholipase D family. Cardiolipin synthase subfamily. ClsA sub-subfamily.

The protein localises to the cell inner membrane. The enzyme catalyses 2 a 1,2-diacyl-sn-glycero-3-phospho-(1'-sn-glycerol) = a cardiolipin + glycerol. Its function is as follows. Catalyzes the reversible phosphatidyl group transfer from one phosphatidylglycerol molecule to another to form cardiolipin (CL) (diphosphatidylglycerol) and glycerol. The chain is Cardiolipin synthase A from Yersinia pseudotuberculosis serotype O:1b (strain IP 31758).